An 827-amino-acid polypeptide reads, in one-letter code: Periplasmic nitrate reductase (827 aa).

The segment at residues 1–32 is a signal peptide (tat-type signal); it reads MELNRRDFMKANAAAAAALAAGITLPVKNVYA. The 57-residue stretch at 37-93 folds into the 4Fe-4S Mo/W bis-MGD-type domain; the sequence is IKWDKAPCRFCGTGCSVLVGTQNGRMVASQGDPDAEVNRGLNCIKGYFLPKIIYGKD. The [4Fe-4S] cluster site is built by Cys-44, Cys-47, Cys-51, and Cys-79. Residues Lys-81, Gln-148, Asn-173, Cys-177, 210-217, 241-245, Met-371, Gln-375, Asn-481, 507-508, Lys-530, Asp-557, and 717-726 each bind Mo-bis(molybdopterin guanine dinucleotide); these read WGSNMAEM, STFEH, SD, and TGRVLEHWHS. Position 793 (Phe-793) interacts with substrate. Mo-bis(molybdopterin guanine dinucleotide) contacts are provided by Asn-801 and Lys-818.

The protein belongs to the prokaryotic molybdopterin-containing oxidoreductase family. NasA/NapA/NarB subfamily. In terms of assembly, component of the periplasmic nitrate reductase NapAB complex composed of NapA and NapB. [4Fe-4S] cluster serves as cofactor. Requires Mo-bis(molybdopterin guanine dinucleotide) as cofactor. Predicted to be exported by the Tat system. The position of the signal peptide cleavage has not been experimentally proven.

It is found in the periplasm. The enzyme catalyses 2 Fe(II)-[cytochrome] + nitrate + 2 H(+) = 2 Fe(III)-[cytochrome] + nitrite + H2O. Functionally, catalytic subunit of the periplasmic nitrate reductase complex NapAB. Receives electrons from NapB and catalyzes the reduction of nitrate to nitrite. The chain is Periplasmic nitrate reductase from Glaesserella parasuis serovar 5 (strain SH0165) (Haemophilus parasuis).